A 490-amino-acid polypeptide reads, in one-letter code: Cobyric acid synthase (490 aa).

Residues 251-444 enclose the GATase cobBQ-type domain; the sequence is GLTIAVIHLP…LHGIFANDAF (194 aa). The Nucleophile role is filled by cysteine 329. Residue histidine 436 is part of the active site.

It belongs to the CobB/CobQ family. CobQ subfamily.

The protein operates within cofactor biosynthesis; adenosylcobalamin biosynthesis. In terms of biological role, catalyzes amidations at positions B, D, E, and G on adenosylcobyrinic A,C-diamide. NH(2) groups are provided by glutamine, and one molecule of ATP is hydrogenolyzed for each amidation. In Roseiflexus castenholzii (strain DSM 13941 / HLO8), this protein is Cobyric acid synthase.